Consider the following 1069-residue polypeptide: Carbamoyl phosphate synthase large chain (1069 aa).

A carboxyphosphate synthetic domain region spans residues 1–401 (MPLNKDIKKV…AFLKGIRSLE (401 aa)). Positions 129, 169, 175, 176, 208, 210, 215, 241, 242, 243, 284, and 298 each coordinate ATP. The ATP-grasp 1 domain occupies 133-327 (RDMMNRIGEP…IAKLAAKIAL (195 aa)). Mg(2+) is bound by residues Gln284, Glu298, and Asn300. The Mn(2+) site is built by Gln284, Glu298, and Asn300. Residues 402–549 (IGKYSLDHKK…YSTYEQYDEV (148 aa)) form an oligomerization domain region. Residues 550-932 (EVSNRRKVIV…ALYKGFVGAN (383 aa)) form a carbamoyl phosphate synthetic domain region. An ATP-grasp 2 domain is found at 674–864 (DELLERLDIS…IVDIATQVMM (191 aa)). Residues Arg710, Lys749, Leu751, Glu755, Gly780, Val781, His782, Ser783, Gln823, and Glu835 each coordinate ATP. Gln823, Glu835, and Asn837 together coordinate Mg(2+). Mn(2+) contacts are provided by Gln823, Glu835, and Asn837. The region spanning 932 to 1069 (NMYPSKEKGK…KDLEVFDITK (138 aa)) is the MGS-like domain. The interval 933-1069 (MYPSKEKGKI…KDLEVFDITK (137 aa)) is allosteric domain.

It belongs to the CarB family. As to quaternary structure, composed of two chains; the small (or glutamine) chain promotes the hydrolysis of glutamine to ammonia, which is used by the large (or ammonia) chain to synthesize carbamoyl phosphate. Tetramer of heterodimers (alpha,beta)4. The cofactor is Mg(2+). Mn(2+) is required as a cofactor.

It catalyses the reaction hydrogencarbonate + L-glutamine + 2 ATP + H2O = carbamoyl phosphate + L-glutamate + 2 ADP + phosphate + 2 H(+). It carries out the reaction hydrogencarbonate + NH4(+) + 2 ATP = carbamoyl phosphate + 2 ADP + phosphate + 2 H(+). It participates in amino-acid biosynthesis; L-arginine biosynthesis; carbamoyl phosphate from bicarbonate: step 1/1. The protein operates within pyrimidine metabolism; UMP biosynthesis via de novo pathway; (S)-dihydroorotate from bicarbonate: step 1/3. Functionally, large subunit of the glutamine-dependent carbamoyl phosphate synthetase (CPSase). CPSase catalyzes the formation of carbamoyl phosphate from the ammonia moiety of glutamine, carbonate, and phosphate donated by ATP, constituting the first step of 2 biosynthetic pathways, one leading to arginine and/or urea and the other to pyrimidine nucleotides. The large subunit (synthetase) binds the substrates ammonia (free or transferred from glutamine from the small subunit), hydrogencarbonate and ATP and carries out an ATP-coupled ligase reaction, activating hydrogencarbonate by forming carboxy phosphate which reacts with ammonia to form carbamoyl phosphate. This chain is Carbamoyl phosphate synthase large chain, found in Clostridium botulinum (strain Eklund 17B / Type B).